The chain runs to 172 residues: Adenine phosphoribosyltransferase (172 aa).

The protein belongs to the purine/pyrimidine phosphoribosyltransferase family. Homodimer.

It localises to the cytoplasm. The enzyme catalyses AMP + diphosphate = 5-phospho-alpha-D-ribose 1-diphosphate + adenine. It functions in the pathway purine metabolism; AMP biosynthesis via salvage pathway; AMP from adenine: step 1/1. Functionally, catalyzes a salvage reaction resulting in the formation of AMP, that is energically less costly than de novo synthesis. This Microcystis aeruginosa (strain NIES-843 / IAM M-2473) protein is Adenine phosphoribosyltransferase.